The following is a 74-amino-acid chain: DNA-directed RNA polymerase subunit omega (74 aa).

This sequence belongs to the RNA polymerase subunit omega family. The RNAP catalytic core consists of 2 alpha, 1 beta, 1 beta' and 1 omega subunit. When a sigma factor is associated with the core the holoenzyme is formed, which can initiate transcription.

It carries out the reaction RNA(n) + a ribonucleoside 5'-triphosphate = RNA(n+1) + diphosphate. Promotes RNA polymerase assembly. Latches the N- and C-terminal regions of the beta' subunit thereby facilitating its interaction with the beta and alpha subunits. The chain is DNA-directed RNA polymerase subunit omega from Helicobacter pylori (strain P12).